Consider the following 475-residue polypeptide: 3-isopropylmalate dehydratase large subunit (475 aa).

[4Fe-4S] cluster is bound by residues cysteine 352, cysteine 412, and cysteine 415.

Belongs to the aconitase/IPM isomerase family. LeuC type 1 subfamily. In terms of assembly, heterodimer of LeuC and LeuD. It depends on [4Fe-4S] cluster as a cofactor.

It carries out the reaction (2R,3S)-3-isopropylmalate = (2S)-2-isopropylmalate. It participates in amino-acid biosynthesis; L-leucine biosynthesis; L-leucine from 3-methyl-2-oxobutanoate: step 2/4. Functionally, catalyzes the isomerization between 2-isopropylmalate and 3-isopropylmalate, via the formation of 2-isopropylmaleate. In Gluconobacter oxydans (strain 621H) (Gluconobacter suboxydans), this protein is 3-isopropylmalate dehydratase large subunit.